The primary structure comprises 79 residues: UPF0180 protein BCAH187_A1552 (79 aa).

Belongs to the UPF0180 family.

This is UPF0180 protein BCAH187_A1552 from Bacillus cereus (strain AH187).